The chain runs to 338 residues: Glyceraldehyde-3-phosphate dehydrogenase, cytosolic (338 aa).

NAD(+) contacts are provided by residues 14–15, Asp36, and Arg83; that span reads RI. Residues 154-156, Thr185, 214-215, and Arg237 each bind D-glyceraldehyde 3-phosphate; these read SCT and TG. Cys155 functions as the Nucleophile in the catalytic mechanism. Asn319 is an NAD(+) binding site.

It belongs to the glyceraldehyde-3-phosphate dehydrogenase family. In terms of assembly, homotetramer.

It localises to the cytoplasm. It carries out the reaction D-glyceraldehyde 3-phosphate + phosphate + NAD(+) = (2R)-3-phospho-glyceroyl phosphate + NADH + H(+). It participates in carbohydrate degradation; glycolysis; pyruvate from D-glyceraldehyde 3-phosphate: step 1/5. Functionally, key enzyme in glycolysis that catalyzes the first step of the pathway by converting D-glyceraldehyde 3-phosphate (G3P) into 3-phospho-D-glyceroyl phosphate. Essential for the maintenance of cellular ATP levels and carbohydrate metabolism. The chain is Glyceraldehyde-3-phosphate dehydrogenase, cytosolic (GAPC) from Ranunculus acris (Meadow buttercup).